Here is a 216-residue protein sequence, read N- to C-terminus: Large ribosomal subunit protein uL1B (216 aa).

At S11 the chain carries Phosphoserine.

Belongs to the universal ribosomal protein uL1 family. Component of the large ribosomal subunit (LSU). Mature yeast ribosomes consist of a small (40S) and a large (60S) subunit. The 40S small subunit contains 1 molecule of ribosomal RNA (18S rRNA) and at least 33 different proteins. The large 60S subunit contains 3 rRNA molecules (25S, 5.8S and 5S rRNA) and at least 46 different proteins. uL1 forms part of the L1 stalk.

The protein localises to the cytoplasm. Its function is as follows. Component of the ribosome, a large ribonucleoprotein complex responsible for the synthesis of proteins in the cell. The small ribosomal subunit (SSU) binds messenger RNAs (mRNAs) and translates the encoded message by selecting cognate aminoacyl-transfer RNA (tRNA) molecules. The large subunit (LSU) contains the ribosomal catalytic site termed the peptidyl transferase center (PTC), which catalyzes the formation of peptide bonds, thereby polymerizing the amino acids delivered by tRNAs into a polypeptide chain. The nascent polypeptides leave the ribosome through a tunnel in the LSU and interact with protein factors that function in enzymatic processing, targeting, and the membrane insertion of nascent chains at the exit of the ribosomal tunnel. uL1 forms part of the L1 stalk, a mobile element that plays a role in evacuating the exit-site tRNA. This Schizosaccharomyces pombe (strain 972 / ATCC 24843) (Fission yeast) protein is Large ribosomal subunit protein uL1B (rpl101).